We begin with the raw amino-acid sequence, 393 residues long: NAD(P)H-quinone oxidoreductase subunit H, chloroplastic (393 aa).

It belongs to the complex I 49 kDa subunit family. As to quaternary structure, NDH is composed of at least 16 different subunits, 5 of which are encoded in the nucleus.

It localises to the plastid. It is found in the chloroplast thylakoid membrane. It catalyses the reaction a plastoquinone + NADH + (n+1) H(+)(in) = a plastoquinol + NAD(+) + n H(+)(out). The enzyme catalyses a plastoquinone + NADPH + (n+1) H(+)(in) = a plastoquinol + NADP(+) + n H(+)(out). Its function is as follows. NDH shuttles electrons from NAD(P)H:plastoquinone, via FMN and iron-sulfur (Fe-S) centers, to quinones in the photosynthetic chain and possibly in a chloroplast respiratory chain. The immediate electron acceptor for the enzyme in this species is believed to be plastoquinone. Couples the redox reaction to proton translocation, and thus conserves the redox energy in a proton gradient. The protein is NAD(P)H-quinone oxidoreductase subunit H, chloroplastic of Cicer arietinum (Chickpea).